Reading from the N-terminus, the 317-residue chain is MKI67 FHA domain-interacting nucleolar phosphoprotein (317 aa).

An N-acetylalanine modification is found at Ala2. Residue Lys40 forms a Glycyl lysine isopeptide (Lys-Gly) (interchain with G-Cter in SUMO2) linkage. In terms of domain architecture, RRM spans 47–125 (GVVYLGHLPS…RLLSCKFMPR (79 aa)). An Omega-N-methylarginine modification is found at Arg116. Glycyl lysine isopeptide (Lys-Gly) (interchain with G-Cter in SUMO2) cross-links involve residues Lys181 and Lys194. A Citrulline modification is found at Arg203. The segment at 203 to 317 (RDSEGNQVLP…KRPRKRKSKQ (115 aa)) is disordered. The segment covering 213-233 (DQKEGLSGEPRRKEKMMKEDI) has biased composition (basic and acidic residues). Ser219 bears the Phosphoserine mark. A compositionally biased stretch (basic residues) spans 238-248 (PKKRKRSRRKK). Ser253 is subject to Phosphoserine. Residues Thr257 and Thr261 each carry the phosphothreonine modification. Residues 265 to 284 (LERRKSQVMEVGGDKDDEII) are compositionally biased toward basic and acidic residues. Omega-N-methylated arginine occurs at positions 267 and 268. Ser270 is modified (phosphoserine). Residue Lys293 forms a Glycyl lysine isopeptide (Lys-Gly) (interchain with G-Cter in SUMO1); alternate linkage. Residue Lys293 forms a Glycyl lysine isopeptide (Lys-Gly) (interchain with G-Cter in SUMO2); alternate linkage. Thr301 carries the phosphothreonine modification. The span at 308-317 (KRPRKRKSKQ) shows a compositional bias: basic residues.

As to quaternary structure, binds to the FHA domain of MKI67; this interaction is enhanced in mitosis. Phosphorylated. Post-translationally, citrullinated by PADI4. Expressed in brain, heart, hind limb muscles, intestine, liver, skin and spleen.

It is found in the nucleus. The protein localises to the nucleolus. Its subcellular location is the chromosome. The sequence is that of MKI67 FHA domain-interacting nucleolar phosphoprotein (Nifk) from Mus musculus (Mouse).